Reading from the N-terminus, the 404-residue chain is Arginine biosynthesis bifunctional protein ArgJ (404 aa).

Positions 156, 182, 193, 277, 399, and 404 each coordinate substrate. Thr193 functions as the Nucleophile in the catalytic mechanism.

The protein belongs to the ArgJ family. In terms of assembly, heterotetramer of two alpha and two beta chains.

It is found in the cytoplasm. The catalysed reaction is N(2)-acetyl-L-ornithine + L-glutamate = N-acetyl-L-glutamate + L-ornithine. It catalyses the reaction L-glutamate + acetyl-CoA = N-acetyl-L-glutamate + CoA + H(+). The protein operates within amino-acid biosynthesis; L-arginine biosynthesis; L-ornithine and N-acetyl-L-glutamate from L-glutamate and N(2)-acetyl-L-ornithine (cyclic): step 1/1. Its pathway is amino-acid biosynthesis; L-arginine biosynthesis; N(2)-acetyl-L-ornithine from L-glutamate: step 1/4. Catalyzes two activities which are involved in the cyclic version of arginine biosynthesis: the synthesis of N-acetylglutamate from glutamate and acetyl-CoA as the acetyl donor, and of ornithine by transacetylation between N(2)-acetylornithine and glutamate. This chain is Arginine biosynthesis bifunctional protein ArgJ, found in Chlorobaculum tepidum (strain ATCC 49652 / DSM 12025 / NBRC 103806 / TLS) (Chlorobium tepidum).